The primary structure comprises 240 residues: Probable alpha-aspartyl dipeptidase (240 aa).

Catalysis depends on charge relay system residues serine 125, aspartate 140, and histidine 162.

It belongs to the peptidase S51 family.

The protein localises to the cytoplasm. The catalysed reaction is Dipeptidase E catalyzes the hydrolysis of dipeptides Asp-|-Xaa. It does not act on peptides with N-terminal Glu, Asn or Gln, nor does it cleave isoaspartyl peptides.. Functionally, hydrolyzes dipeptides containing N-terminal aspartate residues. In Drosophila melanogaster (Fruit fly), this protein is Probable alpha-aspartyl dipeptidase.